Consider the following 66-residue polypeptide: Prokaryotic ubiquitin-like protein UBact (66 aa).

The interval M1 to E66 is disordered. Residues G30–E66 are compositionally biased toward basic and acidic residues. E66 participates in a covalent cross-link: Isoglutamyl lysine isopeptide (Glu-Lys) (interchain with K-? in acceptor proteins).

It belongs to the ubiquitin-like protein UBact family.

Functionally, may function as a protein modifier covalently attached to lysine residues of substrate proteins. This may serve to target the modified proteins for degradation by proteasomes. The polypeptide is Prokaryotic ubiquitin-like protein UBact (Nitrospira moscoviensis).